The sequence spans 262 residues: Acyl-[acyl-carrier-protein]--UDP-N-acetylglucosamine O-acyltransferase (262 aa).

It belongs to the transferase hexapeptide repeat family. LpxA subfamily. Homotrimer.

It is found in the cytoplasm. It catalyses the reaction a (3R)-hydroxyacyl-[ACP] + UDP-N-acetyl-alpha-D-glucosamine = a UDP-3-O-[(3R)-3-hydroxyacyl]-N-acetyl-alpha-D-glucosamine + holo-[ACP]. It participates in glycolipid biosynthesis; lipid IV(A) biosynthesis; lipid IV(A) from (3R)-3-hydroxytetradecanoyl-[acyl-carrier-protein] and UDP-N-acetyl-alpha-D-glucosamine: step 1/6. Involved in the biosynthesis of lipid A, a phosphorylated glycolipid that anchors the lipopolysaccharide to the outer membrane of the cell. In Janthinobacterium sp. (strain Marseille) (Minibacterium massiliensis), this protein is Acyl-[acyl-carrier-protein]--UDP-N-acetylglucosamine O-acyltransferase.